The following is a 65-amino-acid chain: Large ribosomal subunit protein uL29 (65 aa).

This sequence belongs to the universal ribosomal protein uL29 family.

This chain is Large ribosomal subunit protein uL29, found in Lactobacillus johnsonii (strain CNCM I-12250 / La1 / NCC 533).